The primary structure comprises 243 residues: Tyrosine recombinase XerD-like (243 aa).

The Core-binding (CB) domain maps to 1 to 72; the sequence is MKEYIRPFLN…AVNQFLYFLY (72 aa). The Tyr recombinase domain maps to 85-243; sequence LPKVSVSKEQ…KTMITLEKYR (159 aa). Residues Lys149 and Arg210 contribute to the active site. Tyr242 (O-(3'-phospho-DNA)-tyrosine intermediate) is an active-site residue.

The protein belongs to the 'phage' integrase family. XerD-like subfamily.

The protein localises to the cytoplasm. Functionally, putative tyrosine recombinase. Not involved in the cutting and rejoining of the recombining DNA molecules on dif(SL) site. The protein is Tyrosine recombinase XerD-like of Streptococcus sanguinis (strain SK36).